A 193-amino-acid chain; its full sequence is MRTSEVHRATRETDITLSLDLDGTGAGTIETGIPFFDHMLASFARHGRIDLSVRATGDLAVDPHHTIEDIGIVLGTALAESVGDGRGITRFADAAVPMDEALARVALDVGGRGYLVFEGDFSPVGPGGIPGDLIEHFFHSLCSHAGITAHITVTGRNDHHICEAAFKAFARALRAAVAIDPAIGDVPSTKGSL.

It belongs to the imidazoleglycerol-phosphate dehydratase family.

The protein resides in the cytoplasm. It carries out the reaction D-erythro-1-(imidazol-4-yl)glycerol 3-phosphate = 3-(imidazol-4-yl)-2-oxopropyl phosphate + H2O. It functions in the pathway amino-acid biosynthesis; L-histidine biosynthesis; L-histidine from 5-phospho-alpha-D-ribose 1-diphosphate: step 6/9. The protein is Imidazoleglycerol-phosphate dehydratase of Methanoculleus marisnigri (strain ATCC 35101 / DSM 1498 / JR1).